The sequence spans 214 residues: Octanoyltransferase (214 aa).

A BPL/LPL catalytic domain is found at Lys-35–Phe-211. Substrate contacts are provided by residues Arg-75–His-82, Ser-142–Gly-144, and Gly-155–Ser-157. Cys-173 serves as the catalytic Acyl-thioester intermediate.

Belongs to the LipB family.

It is found in the cytoplasm. The enzyme catalyses octanoyl-[ACP] + L-lysyl-[protein] = N(6)-octanoyl-L-lysyl-[protein] + holo-[ACP] + H(+). It participates in protein modification; protein lipoylation via endogenous pathway; protein N(6)-(lipoyl)lysine from octanoyl-[acyl-carrier-protein]: step 1/2. Functionally, catalyzes the transfer of endogenously produced octanoic acid from octanoyl-acyl-carrier-protein onto the lipoyl domains of lipoate-dependent enzymes. Lipoyl-ACP can also act as a substrate although octanoyl-ACP is likely to be the physiological substrate. This Prochlorococcus marinus subsp. pastoris (strain CCMP1986 / NIES-2087 / MED4) protein is Octanoyltransferase.